A 30-amino-acid polypeptide reads, in one-letter code: Cycloviolacin-O2 (30 aa).

Positions 1–30 (GIPCGESCVWIPCISSAIGCSCKSKVCYRN) form a cross-link, cyclopeptide (Gly-Asn). Intrachain disulfides connect cysteine 4–cysteine 20, cysteine 8–cysteine 22, and cysteine 13–cysteine 27.

Post-translationally, this is a cyclic peptide.

In terms of biological role, probably participates in a plant defense mechanism. This Viola biflora (Yellow wood violet) protein is Cycloviolacin-O2.